The following is a 137-amino-acid chain: Large ribosomal subunit protein uL16 (137 aa).

It belongs to the universal ribosomal protein uL16 family. In terms of assembly, part of the 50S ribosomal subunit.

In terms of biological role, binds 23S rRNA and is also seen to make contacts with the A and possibly P site tRNAs. In Mycoplasma capricolum subsp. capricolum (strain California kid / ATCC 27343 / NCTC 10154), this protein is Large ribosomal subunit protein uL16.